We begin with the raw amino-acid sequence, 299 residues long: Hydrogenase maturation factor HypB (299 aa).

Ni(2+) contacts are provided by cysteine 2, cysteine 5, and cysteine 7. The interval 18–57 is disordered; that stretch reads EVGDDGHGHHHHDGHHDHDHDHDHHRGDHEHDDHHHAEDG. Residues 31–57 show a composition bias toward basic and acidic residues; it reads GHHDHDHDHDHHRGDHEHDDHHHAEDG. The tract at residues 107–268 is G-domain; that stretch reads ALNFVSSPGS…LRVNPRLQTL (162 aa). Ni(2+) contacts are provided by cysteine 167, histidine 168, and cysteine 199. Zn(2+) contacts are provided by cysteine 167, histidine 168, and cysteine 199.

The protein belongs to the SIMIBI class G3E GTPase family. HypB/HupM subfamily.

In terms of biological role, involved in the maturation of [NiFe] hydrogenases. Required for nickel insertion into the metal center of the hydrogenase. Exhibits a low intrinsic GTPase activity, which is essential for nickel insertion. Is able to bind 4 nickel ions per subunit. Can also bind zinc. The sequence is that of Hydrogenase maturation factor HypB from Rhizobium leguminosarum bv. viciae.